Here is a 112-residue protein sequence, read N- to C-terminus: Mu-ctenitoxin-Pn1a (112 aa).

Positions 1–19 (MKLLGIFLVASFAFVLSFG) are cleaved as a signal peptide. A propeptide spanning residues 20 to 33 (EEMIEGENPLEDQR) is cleaved from the precursor. 7 disulfides stabilise this stretch: cysteine 39–cysteine 56, cysteine 46–cysteine 62, cysteine 53–cysteine 85, cysteine 55–cysteine 73, cysteine 64–cysteine 71, cysteine 91–cysteine 106, and cysteine 102–cysteine 110. Glycine 111 bears the Glycine amide mark.

This sequence belongs to the neurotoxin 04 (omega-agtx) family. 02 (Tx1) subfamily. Post-translationally, contains 7 disulfide bonds. Expressed by the venom gland.

It is found in the secreted. Reversible inhibitor of neuronal sodium channels (Nav1.2/ SCN2A) that binds in proximity to site 1 and displays increasing affinity as the membrane potential is depolarized. Induces excitatory symptoms and spastic paralysis in mice. This is Mu-ctenitoxin-Pn1a from Phoneutria nigriventer (Brazilian armed spider).